Here is an 83-residue protein sequence, read N- to C-terminus: Small ribosomal subunit protein eS21 (83 aa).

The protein belongs to the eukaryotic ribosomal protein eS21 family. As to quaternary structure, component of the 40S small ribosomal subunit.

It localises to the cytoplasm. The protein localises to the cytosol. It is found in the rough endoplasmic reticulum. Component of the small ribosomal subunit. The ribosome is a large ribonucleoprotein complex responsible for the synthesis of proteins in the cell. The protein is Small ribosomal subunit protein eS21 (rps21) of Xenopus tropicalis (Western clawed frog).